Reading from the N-terminus, the 338-residue chain is Phosphonates-binding periplasmic protein (338 aa).

Positions 1–26 (MNAKIIASLAFTSMFSLSTLLSPAHA) are cleaved as a signal peptide.

The protein belongs to the phosphate/phosphite/phosphonate binding protein family. In terms of assembly, the complex is composed of two ATP-binding proteins (PhnC), two transmembrane proteins (PhnE) and a solute-binding protein (PhnD).

The protein localises to the periplasm. In terms of biological role, phosphonate binding protein that is part of the phosphonate uptake system. Exhibits high affinity for 2-aminoethylphosphonate, and somewhat less affinity to ethylphosphonate, methylphosphonate, phosphonoacetate and phenylphosphonate. This chain is Phosphonates-binding periplasmic protein (phnD), found in Escherichia coli (strain K12).